An 824-amino-acid chain; its full sequence is Acyl-homoserine lactone acylase QuiP (824 aa).

The N-terminal stretch at 1–26 is a signal peptide; it reads MASPALRHFLPRFGAAAAAASFLSLA. Ser264 (nucleophile) is an active-site residue.

It belongs to the peptidase S45 family. In terms of assembly, heterodimer of an alpha subunit and a beta subunit processed from the same precursor.

It is found in the periplasm. It carries out the reaction an N-acyl-L-homoserine lactone + H2O = L-homoserine lactone + a carboxylate. Functionally, catalyzes the deacylation of acyl-homoserine lactone (AHL or acyl-HSL), releasing homoserine lactone (HSL) and the corresponding fatty acid. Possesses a specificity for the degradation of long-chain acyl-HSLs (side chains of seven or more carbons in length). This chain is Acyl-homoserine lactone acylase QuiP (quiP), found in Pseudomonas syringae pv. syringae (strain B728a).